The following is a 111-amino-acid chain: BET1-like protein (111 aa).

The Cytoplasmic portion of the chain corresponds to Met1–Lys86. A phosphoserine mark is found at Ser9 and Ser37. The t-SNARE coiled-coil homology domain maps to Glu15–Val77. Residues Leu87–Ser107 form a helical; Anchor for type IV membrane protein membrane-spanning segment. Residues Arg108–Thr111 are Vesicular-facing.

In terms of assembly, component of a SNARE complex consisting of STX5, YKT6, GOSR1 and BET1L. Interacts with STX5. As to expression, widely expressed. Highest levels in heart, liver, skeletal muscle and kidney.

Its subcellular location is the golgi apparatus membrane. The protein resides in the golgi apparatus. It localises to the trans-Golgi network membrane. Vesicle SNARE required for targeting and fusion of retrograde transport vesicles with the Golgi complex. Required for the integrity of the Golgi complex. The protein is BET1-like protein of Rattus norvegicus (Rat).